The sequence spans 117 residues: Large ribosomal subunit protein bL20 (117 aa).

This sequence belongs to the bacterial ribosomal protein bL20 family.

Its function is as follows. Binds directly to 23S ribosomal RNA and is necessary for the in vitro assembly process of the 50S ribosomal subunit. It is not involved in the protein synthesizing functions of that subunit. The polypeptide is Large ribosomal subunit protein bL20 (Wolinella succinogenes (strain ATCC 29543 / DSM 1740 / CCUG 13145 / JCM 31913 / LMG 7466 / NCTC 11488 / FDC 602W) (Vibrio succinogenes)).